The sequence spans 814 residues: G-type lectin S-receptor-like serine/threonine-protein kinase At1g61400 (814 aa).

The first 34 residues, 1-34 (MDFLFLLLERKNKHMGKKRVVLLWLSIFISFSSA), serve as a signal peptide directing secretion. The 120-residue stretch at 35 to 154 (EITEESPLSI…VSGRTLWESF (120 aa)) folds into the Bulb-type lectin domain. At 35 to 436 (EITEESPLSI…ELDVNKRKKT (402 aa)) the chain is on the extracellular side. N-linked (GlcNAc...) asparagine glycosylation is found at Asn-63, Asn-104, Asn-127, and Asn-246. One can recognise an EGF-like; atypical domain in the interval 288 to 324 (PANSCDIYGVCGPFGFCVISVPPKCKCFKGFIPKSIE). Disulfide bonds link Cys-292/Cys-304 and Cys-298/Cys-312. N-linked (GlcNAc...) asparagine glycans are attached at residues Asn-330, Asn-346, and Asn-385. The 83-residue stretch at 343–425 (CQGNSTGKDA…GELLSIRLAR (83 aa)) folds into the PAN domain. Disulfide bonds link Cys-378–Cys-399 and Cys-382–Cys-388. A helical membrane pass occupies residues 437 to 457 (IIAITVSLTLFVILGFTAFGF). The Cytoplasmic segment spans residues 458-814 (WRRRVEQNAL…EMTESVIHGR (357 aa)). The 286-residue stretch at 500–785 (FSLSNKLGHG…DLPLPKQPTF (286 aa)) folds into the Protein kinase domain. ATP is bound by residues 506–514 (LGHGGFGSV) and Lys-528. 2 positions are modified to phosphoserine: Ser-534 and Ser-549. The caM-binding stretch occupies residues 589–606 (KKRLEIDWPKRFDIIQGI). Asp-625 (proton acceptor) is an active-site residue. Phosphoserine occurs at positions 629 and 642. Thr-659 carries the post-translational modification Phosphothreonine. 2 positions are modified to phosphoserine: Ser-702 and Ser-796.

This sequence belongs to the protein kinase superfamily. Ser/Thr protein kinase family.

The protein resides in the cell membrane. It carries out the reaction L-seryl-[protein] + ATP = O-phospho-L-seryl-[protein] + ADP + H(+). It catalyses the reaction L-threonyl-[protein] + ATP = O-phospho-L-threonyl-[protein] + ADP + H(+). This chain is G-type lectin S-receptor-like serine/threonine-protein kinase At1g61400, found in Arabidopsis thaliana (Mouse-ear cress).